The primary structure comprises 102 residues: Large ribosomal subunit protein bL21 (102 aa).

This sequence belongs to the bacterial ribosomal protein bL21 family. In terms of assembly, part of the 50S ribosomal subunit. Contacts protein L20.

This protein binds to 23S rRNA in the presence of protein L20. In Nocardioides sp. (strain ATCC BAA-499 / JS614), this protein is Large ribosomal subunit protein bL21.